Consider the following 399-residue polypeptide: Secreted RxLR effector protein 36 (399 aa).

Residues 1–21 form the signal peptide; sequence MRGTIYVAIAILVAASSRSSA. Residues 50 to 71 carry the RxLR-dEER motif; it reads RILRESRGSNDKLAVGAGDEER. N-linked (GlcNAc...) asparagine glycosylation occurs at Asn-75. A disordered region spans residues 126-145; sequence IDPTPSNLGGQALHAPPNPD.

It belongs to the RxLR effector family.

It is found in the secreted. The protein resides in the host nucleus. In terms of biological role, secreted effector that completely suppresses the host cell death induced by cell death-inducing proteins. The polypeptide is Secreted RxLR effector protein 36 (Plasmopara viticola (Downy mildew of grapevine)).